The chain runs to 417 residues: Phosphoglycerate kinase 2 (417 aa).

Positions 23, 24, 25, 26, 38, 39, 62, 63, 65, 66, 121, 122, 168, and 169 each coordinate (2R)-3-phosphoglycerate. Residue G212 participates in ADP binding. G212 is a binding site for CDP. AMP is bound by residues A213 and K214. Residue A213 participates in ATP binding. A213 lines the Mg(2+) pocket. D217 is a CDP binding site. D217 provides a ligand contact to Mg(2+). K218 contacts AMP. K218 is an ATP binding site. G236 serves as a coordination point for ADP. G236 contacts CDP. Positions 237 and 312 each coordinate AMP. 2 residues coordinate ATP: G237 and G312. CDP contacts are provided by G337 and F342. F342 contacts ADP. E343 is a binding site for AMP. E343, D374, and T375 together coordinate ATP. D374 contributes to the Mg(2+) binding site.

The protein belongs to the phosphoglycerate kinase family. As to quaternary structure, monomer. The cofactor is Mg(2+).

The protein resides in the cytoplasm. It localises to the mitochondrion. The catalysed reaction is (2R)-3-phosphoglycerate + ATP = (2R)-3-phospho-glyceroyl phosphate + ADP. It functions in the pathway carbohydrate degradation; glycolysis; pyruvate from D-glyceraldehyde 3-phosphate: step 2/5. Its function is as follows. Catalyzes one of the two ATP producing reactions in the glycolytic pathway via the reversible conversion of 1,3-diphosphoglycerate to 3-phosphoglycerate. Both L- and D- forms of purine and pyrimidine nucleotides can be used as substrates, but the activity is much lower on pyrimidines. Negatively regulates the biosynthesis of acetyl-CoA from pyruvate in the mitochondrion. This is Phosphoglycerate kinase 2 (PGK2) from Rhizopus niveus.